Reading from the N-terminus, the 896-residue chain is Pentatricopeptide repeat-containing protein At5g03800 (896 aa).

17 PPR repeats span residues 113–143 (KTRLGNALISTYLKLGFPREAILVFVSLSSP), 144–178 (TVVSYTALISGFSRLNLEIEALKVFFRMRKAGLVQ), 180–214 (NEYTFVAILTACVRVSRFSLGIQIHGLIVKSGFLN), 215–247 (SVFVSNSLMSLYDKDSGSSCDDVLKLFDEIPQR), 248–278 (DVASWNTVVSSLVKEGKSHKAFDLFYEMNRV), 284–318 (DSFTLSTLLSSCTDSSVLLRGRELHGRAIRIGLMQ), 319–349 (ELSVNNALIGFYSKFWDMKKVESLYEMMMAQ), 350–380 (DAVTFTEMITAYMSFGMVDSAVEIFANVTEK), 381–415 (NTITYNALMAGFCRNGHGLKALKLFTDMLQRGVEL), 416–450 (TDFSLTSAVDACGLVSEKKVSEQIHGFCIKFGTAF), 451–481 (NPCIQTALLDMCTRCERMADAEEMFDQWPSN), 484–519 (SSKATTSIIGGYARNGLPDKAVSLFHRTLCEQKLFL), 520–554 (DEVSLTLILAVCGTLGFREMGYQIHCYALKAGYFS), 555–585 (DISLGNSLISMYAKCCDSDDAIKIFNTMREH), 586–620 (DVISWNSLISCYILQRNGDEALALWSRMNEKEIKP), 621–653 (DIITLTLVISAFRYTESNKLSSCRDLFLSMKTI), and 659–689 (TTEHYTAFVRVLGHWGLLEEAEDTINSMPVQ). The type E motif stretch occupies residues 694–769 (VLRALLDSCR…HPAKSWIIHE (76 aa)). The tract at residues 770–800 (NKIHSFHARDTSHPQEKDIYRGLEILIMECL) is type E(+) motif. The tract at residues 801 to 896 (KVGYEPNTEY…NGKCSCRDLW (96 aa)) is type DYW motif.

Belongs to the PPR family. PCMP-H subfamily.

May play a role in embryogenesis. The sequence is that of Pentatricopeptide repeat-containing protein At5g03800 (EMB175) from Arabidopsis thaliana (Mouse-ear cress).